Reading from the N-terminus, the 729-residue chain is FYN-binding protein 2 (729 aa).

Disordered stretches follow at residues 18–130 (KFNA…EEKG), 170–320 (EGQK…SAEL), 371–408 (ELSP…PPKV), and 469–490 (VTKE…KTYD). Composition is skewed to polar residues over residues 69–81 (GVSQ…TLKS), 89–99 (KTSSSSGTPEK), 190–216 (GAQT…SSVS), and 226–240 (KSPA…SQCQ). Over residues 275 to 284 (GPPPPKPSKP) the composition is skewed to pro residues. Residues 374–402 (PRPKEEENTMEEKESWESEPLEPRKELHP) are compositionally biased toward basic and acidic residues. A compositionally biased stretch (low complexity) spans 473 to 485 (TPSPSTIRSSSSS). Phosphotyrosine is present on tyrosine 489. Residues 520-523 (YEDI) carry the SH2-binding; to LCP2 motif. The tract at residues 576–603 (DLGPRSQDDSQDGIIYDDVDTREKESND) is disordered. Over residues 584-593 (DSQDGIIYDD) the composition is skewed to acidic residues. Phosphotyrosine is present on tyrosine 591. The segment covering 594 to 603 (VDTREKESND) has biased composition (basic and acidic residues). The SH3 domain maps to 668 to 728 (LVINRAVACA…LVEHLDFKHQ (61 aa)).

As to quaternary structure, interacts with SKAP1, LCK and FYN. The phosphorylated form interacts with LCP2. Post-translationally, phosphorylation is required for its function in T-cell activation.

The protein localises to the membrane raft. In terms of biological role, adapter protein that plays a role in T-cell receptor (TCR)-mediated activation of signaling pathways. Required for T-cell activation and integrin-mediated T-cell adhesion in response to TCR stimulation. The sequence is that of FYN-binding protein 2 from Mus musculus (Mouse).